Here is a 486-residue protein sequence, read N- to C-terminus: CDT1-like protein b (486 aa).

Disordered regions lie at residues 273–294 (PEGGDDNSLRSTNSLARGPSRS) and 348–371 (VKDDISNESGDEKSNYEGDNASDD). Over residues 281–294 (LRSTNSLARGPSRS) the composition is skewed to polar residues. Residues 348–363 (VKDDISNESGDEKSNY) show a composition bias toward basic and acidic residues.

This sequence belongs to the Cdt1 family. In terms of tissue distribution, expressed in proliferating (e.g. shoot and root apical meristems, organ primordia, guard cells and stomatal lineage) and endoreplicating cells (e.g. developing trichomes).

Its subcellular location is the nucleus. Its function is as follows. Member of the pre-replication complex. Regulates endoreduplication. Involved in the coordination of cell and plastid division. The chain is CDT1-like protein b (CDT1B) from Arabidopsis thaliana (Mouse-ear cress).